We begin with the raw amino-acid sequence, 157 residues long: Monooxygenase CPUR_05417 (157 aa).

It belongs to the avfA family.

It participates in secondary metabolite biosynthesis. Its function is as follows. Monooxygenase; part of the ergochrome gene cluster responsible for the typical purple-black color of the ergot sclerotia. The ergochrome gene cluster produces several ergot pigments including the yellow ergochrome secalonic acid and its derivatives, as well as the red anthraquinones endocrocin and clavorubin. The pathway begins with the synthesis of atrochrysone thioester by the polyketide synthase (PKS) CPUR_05437. The atrochrysone carboxyl ACP thioesterase CPUR_05436 then breaks the thioester bond and releases the atrochrysone carboxylic acid from CPUR_05437. The atrochrysone carboxylic acid is then converted to atrochrysone which is further transformed into emodin anthrone. The next step is performed by the anthrone oxygenase CPUR_05434 that catalyzes the oxidation of emodinanthrone to emodin. Emodin is further modified to yield monodictyphenone via several steps involving CPUR_05427, CPUR_05428, CPUR_05429 and CPUR_05430. The short chain dehydrogenase/reductase CPUR_05418 then catalyzes the C-5 ketoreduction to give the xanthone skeleton of the monomeric units. Ergochromes formation requires further dimerization steps of different xanthone units, probably catalyzed by the cytochrome P450 monooxygenase CPUR_05419. CPUR_05425, CPUR_05426 and CPUR_05431 are unique to Claviceps, thus it is likely that they are involved in further modification of xanthone units or in their dimerization. The yellow ergochromes and the red anthraquinone pigments endocrocin and clavorubin are products from the same PKS derived precursors and the latter are likely shunt products in the pathway of xanthone biosynthesis. It is proposed that atrochrysone carboxylic acid released from the PKS CPUR_05437 can also be converted to endocrocin anthrone which is further oxidized into endocrocin by CPUR_05435. Endocrocin could be then modified to clavorubin, possibly by CPUR_05423 and CPUR_05431. Clavorubin is the principal anthraquinone metabolite produced by the cluster with a much higher yield compared to endocrocin. The chain is Monooxygenase CPUR_05417 from Claviceps purpurea (strain 20.1) (Ergot fungus).